The sequence spans 216 residues: U1 small nuclear ribonucleoprotein A (216 aa).

2 consecutive RRM domains span residues 7–86 (QTIY…YSKS) and 142–216 (QILF…FAKK). Positions 97-142 (TFKERPKKVKPPKPAPGTDEKKDKKKKPSSAENSNPNAQTEQPPNQ) are disordered. Over residues 126-142 (SAENSNPNAQTEQPPNQ) the composition is skewed to polar residues.

This sequence belongs to the RRM U1 A/B'' family. In terms of assembly, belongs to the spliceosome where it is associated with snRNP U1. Interacts with the SMN complex.

It localises to the nucleus. In terms of biological role, binds stem loop II of U1 snRNA. It is the first snRNP to interact with pre-mRNA. This interaction is required for the subsequent binding of U2 snRNP and the U4/U6/U5 tri-snRNP. Plays a role in regulating sex-lethal splicing. This is U1 small nuclear ribonucleoprotein A (snf) from Drosophila melanogaster (Fruit fly).